The following is a 158-amino-acid chain: MVFDPRTLDNPKEISAYRDQRYQGTVRDQETALRTSCTLYVGNLSYYTKEDQVYELFGRAGDVRRVIMGLDRFKKTPCGFCFVEYYTREDAELALQNISNTRMDDRVIRADWDAGFIEGRQYGRGKHGGQVRDEYRKDYDPERGGYNRAIAQKGGDRQ.

Residues Tyr-17, Tyr-40, 109-113 (RADWD), 120-124 (RQYGR), and 130-131 (QV) each bind mRNA. Residues 37–115 (CTLYVGNLSY…RVIRADWDAG (79 aa)) form the RRM domain. The tract at residues 123–158 (GRGKHGGQVRDEYRKDYDPERGGYNRAIAQKGGDRQ) is disordered. The segment covering 130 to 145 (QVRDEYRKDYDPERGG) has biased composition (basic and acidic residues).

It belongs to the RRM NCBP2 family. In terms of assembly, component of the nuclear cap-binding complex (CBC), a heterodimer composed of ncbp-1 and ncbp-2 that interacts with m7GpppG-capped RNA.

It is found in the nucleus. Its function is as follows. Component of the cap-binding complex (CBC), which binds co-transcriptionally to the 5' cap of pre-mRNAs and is involved in various processes such as pre-mRNA splicing and RNA-mediated gene silencing (RNAi). The CBC complex is involved in miRNA-mediated RNA interference and is required for primary microRNAs (miRNAs) processing. In the CBC complex, ncbp-2 recognizes and binds capped RNAs (m7GpppG-capped RNA) but requires ncbp-1 to stabilize the movement of its N-terminal loop and lock the CBC into a high affinity cap-binding state with the cap structure. The protein is Nuclear cap-binding protein subunit 2 (ncbp-2) of Caenorhabditis elegans.